A 554-amino-acid polypeptide reads, in one-letter code: MASPPAHRSSKAADEELPKASSTFHPSLWGSFFLTYQPPTAPQRANMKERAEVLRERVRKVLKGSTTDQLPETVNLILTLQRLGLGYYYENEIDKLLHQIYSNSDYNVKDLNLVSQRFYLLRKNGYDVPSDVFLSFKTEEGGFACAAADTRSLLSLYNAAYLWKHGEEVLDEAISSTRLRLQDLLGRLLPESPFAKEVSSSLRTPLFRRVGILEARNYIPIYETEATRNEAVLELAKLNFNLQQLDFCEELKHCSAWWNEMIAKSKLTFVRDRIVEEYFWMNGACYDPPYSLSRIILTKITGLITIIDDMFDTHGTTEDCMKFAEAFGRWDESAIHLLPEYMKDFYILMLETFQSFEDALGPEKSYRVLYLKQAMERLVELYTKEIKWRDEDYVATMSEHLKVSAESIGANALTCSAYAGMGDMSITKETFEWALSFPQFIRTFGSFVRLSNDVESTKREQTKDHSPSTVHCYMKEHGITMDDACEKIKELIEDSWKDMLEQSLALKGLPKVVPQLVFDFSRTTDNMYRDRDALTSSEALKEMIQLLFVEPIPE.

Mg(2+)-binding residues include D308 and D312. Residues D308, D312, R449, and N452 each coordinate substrate. The DDXXD motif signature appears at 308-312; it reads DDMFD. The Mg(2+) site is built by N452, S456, and E460.

It belongs to the terpene synthase family. In terms of assembly, monomer. Mg(2+) serves as cofactor. The cofactor is Mn(2+).

It is found in the cytoplasm. It functions in the pathway secondary metabolite biosynthesis; terpenoid biosynthesis. Functionally, non-functional sesquiterpene synthase having less than 1% of the activity found in cv. Delprim. In Zea mays (Maize), this protein is Inactive sesquithujene synthase.